A 451-amino-acid chain; its full sequence is Serine--tRNA ligase, cytoplasmic (451 aa).

A disulfide bridge connects residues C213 and C244. 238-240 (TAE) is an L-serine binding site. ATP-binding positions include 269–271 (RKE) and V285. Position 292 (E292) interacts with L-serine. Position 358 to 361 (358 to 361 (ELVS)) interacts with ATP. An L-serine-binding site is contributed by T396.

It belongs to the class-II aminoacyl-tRNA synthetase family. Type-1 seryl-tRNA synthetase subfamily. As to quaternary structure, homodimer. The tRNA molecule binds across the dimer.

The protein resides in the cytoplasm. It is found in the cytosol. The catalysed reaction is tRNA(Ser) + L-serine + ATP = L-seryl-tRNA(Ser) + AMP + diphosphate + H(+). In terms of biological role, catalyzes the attachment of serine to tRNA(Ser) in a two-step reaction: serine is first activated by ATP to form Ser-AMP and then transferred to the acceptor end of tRNA(Ser). This Arabidopsis thaliana (Mouse-ear cress) protein is Serine--tRNA ligase, cytoplasmic.